The primary structure comprises 890 residues: uncharacterized protein (890 aa).

The N-terminal stretch at 1–20 (MKILKSLVLLVLFMAMPAKA) is a signal peptide. 6 consecutive transmembrane segments (helical) span residues 518–538 (AALT…ALKL), 567–587 (TYFF…VVGA), 613–633 (LLFI…IITI), 651–671 (VIAF…IILM), 684–704 (ISTL…FLLI), and 775–795 (FLVL…SYGL). The disordered stretch occupies residues 860 to 890 (KARKPEGGEHTNKFLAERNDVPKKEEGERKE). Residues 862 to 890 (RKPEGGEHTNKFLAERNDVPKKEEGERKE) show a composition bias toward basic and acidic residues.

Belongs to the TrbL/VirB6 family.

The protein resides in the cell membrane. This is an uncharacterized protein from Rickettsia felis (strain ATCC VR-1525 / URRWXCal2) (Rickettsia azadi).